Reading from the N-terminus, the 439-residue chain is Protein translocase subunit SecY (439 aa).

10 helical membrane-spanning segments follow: residues 19–39 (ILFTIFILFVFRLGAHITAPG), 68–88 (YSLFAMGVSPYITASIIVQLL), 116–136 (YITLVLAMAQSIGITAGFQAM), 151–171 (LMIGVLLTTGSMVVTWMGEQI), 176–196 (FGSGVSVIIFAGIVSGIPSAI), 216–236 (WIFVIGLILSAIVIIYVTTFV), 269–289 (VIPVIFAGSITTAPATILQFL), 312–332 (WTGMLFYALLIVLFTFFYSFV), 373–393 (VGSLFLGLISIIPIAAQNVWG), and 396–416 (KIVALGGTSLLILIQVAIQAV).

It belongs to the SecY/SEC61-alpha family. As to quaternary structure, component of the Sec protein translocase complex. Heterotrimer consisting of SecY, SecE and SecG subunits. The heterotrimers can form oligomers, although 1 heterotrimer is thought to be able to translocate proteins. Interacts with the ribosome. Interacts with SecDF, and other proteins may be involved. Interacts with SecA.

The protein resides in the cell membrane. Its function is as follows. The central subunit of the protein translocation channel SecYEG. Consists of two halves formed by TMs 1-5 and 6-10. These two domains form a lateral gate at the front which open onto the bilayer between TMs 2 and 7, and are clamped together by SecE at the back. The channel is closed by both a pore ring composed of hydrophobic SecY resides and a short helix (helix 2A) on the extracellular side of the membrane which forms a plug. The plug probably moves laterally to allow the channel to open. The ring and the pore may move independently. The sequence is that of Protein translocase subunit SecY from Lactococcus lactis subsp. cremoris (Streptococcus cremoris).